We begin with the raw amino-acid sequence, 113 residues long: Protein S100-A9 (113 aa).

Ala-2 carries the N-acetylalanine modification. EF-hand domains are found at residues 13–48 (ITTIIDTFHQYSRKEGHPDTLSKKEFRQMVEAQLAT) and 55–90 (RNEALINDIMEDLDTNQDNQLSFEECMMLMAKLIFA). His-21 provides a ligand contact to Zn(2+). Ser-24 and His-29 together coordinate Ca(2+). Asp-31 is a Zn(2+) binding site. Ca(2+) is bound by residues Thr-32, Glu-37, Asp-68, Asn-70, Asp-72, Gln-74, and Glu-79. The Zn(2+) site is built by His-92 and His-96. Pros-methylhistidine is present on His-107.

Belongs to the S-100 family. As to quaternary structure, homodimer. Preferentially exists as a heterodimer or heterotetramer with S100A8 known as calprotectin (S100A8/A9). S100A9 interacts with ATP2A2. S100A9 interacts with AGER, and with the heterodimeric complex formed by TLR4 and LY96 in the presence of calcium and/or zinc ions. S100A9 binds quinoline-3-carboxamides in the presence of calcium and/or zinc ions. S100A9 interacts with amyloid-beta protein 40. Calprotectin (S100A8/9) interacts with CEACAM3 and tubulin filaments in a calcium-dependent manner. Heterotetrameric calprotectin (S100A8/A9) interacts with ANXA6 and associates with tubulin filaments in activated monocytes. Calprotectin (S100A8/9) interacts with NCF2/P67PHOX, RAC1, RAC2, CYBA and CYBB. Calprotectin (S100A8/9) interacts with NOS2 to form the iNOS-S100A8/A9 transnitrosylase complex; induced by LDL(ox). Calprotectin (S100A8/9) interacts with CD69. In terms of processing, phosphorylated. Phosphorylation inhibits activation of tubulin polymerization. Post-translationally, methylation at His-107 by METTL9 reduces zinc-binding without affecting heterodimerization with S100A8.

It is found in the secreted. The protein localises to the cytoplasm. The protein resides in the cytoskeleton. Its subcellular location is the cell membrane. In terms of biological role, S100A9 is a calcium- and zinc-binding protein which plays a prominent role in the regulation of inflammatory processes and immune response. It can induce neutrophil chemotaxis, adhesion, can increase the bactericidal activity of neutrophils by promoting phagocytosis via activation of SYK, PI3K/AKT, and ERK1/2 and can induce degranulation of neutrophils by a MAPK-dependent mechanism. Predominantly found as calprotectin (S100A8/A9) which has a wide plethora of intra- and extracellular functions. The intracellular functions include: facilitating leukocyte arachidonic acid trafficking and metabolism, modulation of the tubulin-dependent cytoskeleton during migration of phagocytes and activation of the neutrophilic NADPH-oxidase. Also participates in regulatory T-cell differentiation together with CD69. Activates NADPH-oxidase by facilitating the enzyme complex assembly at the cell membrane, transferring arachidonic acid, an essential cofactor, to the enzyme complex and S100A8 contributes to the enzyme assembly by directly binding to NCF2/P67PHOX. The extracellular functions involve pro-inflammatory, antimicrobial, oxidant-scavenging and apoptosis-inducing activities. Its pro-inflammatory activity includes recruitment of leukocytes, promotion of cytokine and chemokine production, and regulation of leukocyte adhesion and migration. Acts as an alarmin or a danger associated molecular pattern (DAMP) molecule and stimulates innate immune cells via binding to pattern recognition receptors such as Toll-like receptor 4 (TLR4) and receptor for advanced glycation endproducts (AGER). Binding to TLR4 and AGER activates the MAP-kinase and NF-kappa-B signaling pathways resulting in the amplification of the pro-inflammatory cascade. Has antimicrobial activity towards bacteria and fungi and exerts its antimicrobial activity probably via chelation of Zn(2+) which is essential for microbial growth. Can induce cell death via autophagy and apoptosis and this occurs through the cross-talk of mitochondria and lysosomes via reactive oxygen species (ROS) and the process involves BNIP3. Can regulate neutrophil number and apoptosis by an anti-apoptotic effect; regulates cell survival via ITGAM/ITGB and TLR4 and a signaling mechanism involving MEK-ERK. Its role as an oxidant scavenger has a protective role in preventing exaggerated tissue damage by scavenging oxidants. The iNOS-S100A8/A9 transnitrosylase complex is proposed to direct selective inflammatory stimulus-dependent S-nitrosylation of multiple targets such as GAPDH, NXA5, EZR, MSN and VIM by recognizing a [IL]-x-C-x-x-[DE] motif. This chain is Protein S100-A9 (S100a9), found in Mus musculus (Mouse).